The chain runs to 161 residues: MIDADGYRPNVGIILMNERGQLLWARRVGQNAWQFPQGGIKSDETPEEALFRELKEEVGLDPHQVEIIGKTRGWLRYRLPKRMLRHNSKPLCIGQKQKWFLLSIRCPDASVCVDGTETPEFDGWRWVSYWYPLGQVVAFKKDVYRRALKELIPSAHRRLEK.

One can recognise a Nudix hydrolase domain in the interval glycine 6–lysine 149. The short motif at glycine 38–glycine 59 is the Nudix box element.

It belongs to the Nudix hydrolase family. RppH subfamily. The cofactor is a divalent metal cation.

Its function is as follows. Accelerates the degradation of transcripts by removing pyrophosphate from the 5'-end of triphosphorylated RNA, leading to a more labile monophosphorylated state that can stimulate subsequent ribonuclease cleavage. The sequence is that of RNA pyrophosphohydrolase from Marinomonas sp. (strain MWYL1).